Here is a 421-residue protein sequence, read N- to C-terminus: Outer capsid protein P8 (421 aa).

It belongs to the phytoreovirus outer capsid protein P8 family. Homotrimer. Homomultimer. Interacts with host peroxisomal glycolate oxidase (GOX). This interaction mediates its relocation to virus factories peripheral to host peroxisomes.

The protein localises to the virion. Its subcellular location is the host cytoplasm. In terms of biological role, capsid protein which self-assembles to form the outer icosahedral capsid with a T=13 symmetry, about 70 nm in diameter and consisting of 780 molecules capsid proteins. The sequence is that of Outer capsid protein P8 from Alopecurus aequalis (Barnyard grass).